The sequence spans 179 residues: UPF0227 protein Shewmr7_1806 (179 aa).

It belongs to the UPF0227 family.

In Shewanella sp. (strain MR-7), this protein is UPF0227 protein Shewmr7_1806.